Here is a 68-residue protein sequence, read N- to C-terminus: Medusin-AS (68 aa).

An N-terminal signal peptide occupies residues 1-22 (MAFLKKSLFLVLFLGLVSLSVC). Positions 23 to 49 (EEEKRESEEEKNEQEEDDRDERSEEKR) are excised as a propeptide. The disordered stretch occupies residues 24-46 (EEKRESEEEKNEQEEDDRDERSE). A compositionally biased stretch (acidic residues) spans 31 to 41 (EEKNEQEEDDR). The residue at position 67 (L67) is a Leucine amide.

This sequence belongs to the frog skin active peptide (FSAP) family. Medusin subfamily. As to expression, expressed by the skin glands.

It localises to the secreted. Its function is as follows. Antimicrobial peptide active against Gram-positive bacteria and fungi but inactive against Gram-negative bacteria. Also inhibits growth of B.dendrobatidis zoospores at high concentrations. Shows anticancer activities. Shows hemolytic activity. This Agalychnis spurrelli (Gliding leaf frog) protein is Medusin-AS.